An 87-amino-acid polypeptide reads, in one-letter code: Small ribosomal subunit protein bS18B (87 aa).

The protein belongs to the bacterial ribosomal protein bS18 family. As to quaternary structure, part of the 30S ribosomal subunit. Forms a tight heterodimer with protein bS6.

In terms of biological role, binds as a heterodimer with protein bS6 to the central domain of the 16S rRNA, where it helps stabilize the platform of the 30S subunit. The sequence is that of Small ribosomal subunit protein bS18B from Mycobacterium marinum (strain ATCC BAA-535 / M).